Reading from the N-terminus, the 183-residue chain is Large ribosomal subunit protein eL18 (183 aa).

Residues 150 to 183 (RHFGPAPGAPRSHTKPYVRTKGHEKARPSRRANV) form a disordered region.

It belongs to the eukaryotic ribosomal protein eL18 family.

The protein resides in the cytoplasm. The polypeptide is Large ribosomal subunit protein eL18 (RpL18) (Bombyx mori (Silk moth)).